The following is a 371-amino-acid chain: Queuine tRNA-ribosyltransferase (371 aa).

The Proton acceptor role is filled by Asp-90. Substrate-binding positions include Asp-90–Phe-94, Asp-144, Gln-189, and Gly-215. Residues Gly-246–Asn-252 are RNA binding. Asp-265 acts as the Nucleophile in catalysis. The RNA binding; important for wobble base 34 recognition stretch occupies residues Thr-270–Arg-274. The Zn(2+) site is built by Cys-303, Cys-305, Cys-308, and His-334.

The protein belongs to the queuine tRNA-ribosyltransferase family. As to quaternary structure, homodimer. Within each dimer, one monomer is responsible for RNA recognition and catalysis, while the other monomer binds to the replacement base PreQ1. It depends on Zn(2+) as a cofactor.

It catalyses the reaction 7-aminomethyl-7-carbaguanine + guanosine(34) in tRNA = 7-aminomethyl-7-carbaguanosine(34) in tRNA + guanine. It participates in tRNA modification; tRNA-queuosine biosynthesis. Functionally, catalyzes the base-exchange of a guanine (G) residue with the queuine precursor 7-aminomethyl-7-deazaguanine (PreQ1) at position 34 (anticodon wobble position) in tRNAs with GU(N) anticodons (tRNA-Asp, -Asn, -His and -Tyr). Catalysis occurs through a double-displacement mechanism. The nucleophile active site attacks the C1' of nucleotide 34 to detach the guanine base from the RNA, forming a covalent enzyme-RNA intermediate. The proton acceptor active site deprotonates the incoming PreQ1, allowing a nucleophilic attack on the C1' of the ribose to form the product. After dissociation, two additional enzymatic reactions on the tRNA convert PreQ1 to queuine (Q), resulting in the hypermodified nucleoside queuosine (7-(((4,5-cis-dihydroxy-2-cyclopenten-1-yl)amino)methyl)-7-deazaguanosine). The polypeptide is Queuine tRNA-ribosyltransferase (Helicobacter pylori (strain G27)).